The chain runs to 109 residues: Cell division protein ZapA (109 aa).

Residues 21 to 99 (PEQRDALNQA…IEQALLEQGR (79 aa)) adopt a coiled-coil conformation.

Belongs to the ZapA family. Type 1 subfamily. Homodimer. Interacts with FtsZ.

The protein localises to the cytoplasm. Its function is as follows. Activator of cell division through the inhibition of FtsZ GTPase activity, therefore promoting FtsZ assembly into bundles of protofilaments necessary for the formation of the division Z ring. It is recruited early at mid-cell but it is not essential for cell division. In Klebsiella pneumoniae (strain 342), this protein is Cell division protein ZapA.